The following is a 631-amino-acid chain: tRNA uridine 5-carboxymethylaminomethyl modification enzyme MnmG (631 aa).

15–20 (GAGHAG) provides a ligand contact to FAD. Residues 203–232 (TPPRVDGNTVDYSKTQEEPGDKEPRHFSYT) are disordered. Positions 216-232 (KTQEEPGDKEPRHFSYT) are enriched in basic and acidic residues. Position 276–290 (276–290 (GPRYCPSIEDKVVRF)) interacts with NAD(+).

It belongs to the MnmG family. In terms of assembly, homodimer. Heterotetramer of two MnmE and two MnmG subunits. Requires FAD as cofactor.

The protein resides in the cytoplasm. NAD-binding protein involved in the addition of a carboxymethylaminomethyl (cmnm) group at the wobble position (U34) of certain tRNAs, forming tRNA-cmnm(5)s(2)U34. This chain is tRNA uridine 5-carboxymethylaminomethyl modification enzyme MnmG, found in Lactobacillus gasseri (strain ATCC 33323 / DSM 20243 / BCRC 14619 / CIP 102991 / JCM 1131 / KCTC 3163 / NCIMB 11718 / NCTC 13722 / AM63).